The following is a 102-amino-acid chain: ATP-dependent Clp protease adapter protein ClpS (102 aa).

Belongs to the ClpS family. As to quaternary structure, binds to the N-terminal domain of the chaperone ClpA.

Its function is as follows. Involved in the modulation of the specificity of the ClpAP-mediated ATP-dependent protein degradation. This chain is ATP-dependent Clp protease adapter protein ClpS, found in Shewanella sediminis (strain HAW-EB3).